We begin with the raw amino-acid sequence, 542 residues long: Probable folate-biopterin transporter 8, chloroplastic (542 aa).

The N-terminal 78 residues, 1–78, are a transit peptide targeting the chloroplast; sequence MERIMINPLL…GVSEFEETAR (78 aa). Residues 24–45 form a disordered region; the sequence is LSSIHRQQQQQERQSNNNTLFM. A run of 12 helical transmembrane segments spans residues 103–123, 132–152, 155–175, 181–201, 223–243, 246–266, 308–328, 338–358, 369–389, 404–424, 446–466, and 477–497; these read FPWL…PSTL, LPMV…IGSG, VPYI…MGIF, VLPS…ITEV, ALMA…YLLL, PPKI…VVSL, LIWA…VFCY, SVIG…TVVY, PLIH…YILV, VLCF…PFAV, LCLS…LIGI, and GILI…LVPM. Residues 506–542 are disordered; the sequence is GKRGISKRSRRNRRVGRVVDKESVTYRRERESEEAQR. The segment covering 509–521 has biased composition (basic residues); the sequence is GISKRSRRNRRVG. Residues 522-542 show a composition bias toward basic and acidic residues; sequence RVVDKESVTYRRERESEEAQR.

Belongs to the major facilitator superfamily. Folate-biopterin transporter (TC 2.A.71) family.

It localises to the plastid. It is found in the chloroplast membrane. Its function is as follows. Could mediate folate transport. The polypeptide is Probable folate-biopterin transporter 8, chloroplastic (Arabidopsis thaliana (Mouse-ear cress)).